The following is an 86-amino-acid chain: Hepcidin-1 (86 aa).

An N-terminal signal peptide occupies residues 1 to 22; the sequence is MKAFSVAVVLVIACMFILESTA. The propeptide occupies 23–59; sequence VPFSEVRTEEVGSFDSPVGEHQQPGGESMHLPEPFRF. Cystine bridges form between Cys-68–Cys-84, Cys-71–Cys-74, Cys-72–Cys-80, and Cys-75–Cys-83.

It belongs to the hepcidin family.

It localises to the secreted. Its function is as follows. Seems to act as a signaling molecule involved in the maintenance of iron homeostasis. Seems to be required in conjunction with HFE to regulate both intestinal iron absorption and iron storage in macrophages. May also have antimicrobial activity. This is Hepcidin-1 (hamp1) from Salmo salar (Atlantic salmon).